A 167-amino-acid polypeptide reads, in one-letter code: Ribosome-binding factor A (167 aa).

The segment at 127-167 (SRANAQYAGDADPYKHDEPDDDDFDDDDDVEVEDWDDDDEA) is disordered. The segment covering 145–167 (PDDDDFDDDDDVEVEDWDDDDEA) has biased composition (acidic residues).

The protein belongs to the RbfA family. In terms of assembly, monomer. Binds 30S ribosomal subunits, but not 50S ribosomal subunits or 70S ribosomes.

The protein localises to the cytoplasm. One of several proteins that assist in the late maturation steps of the functional core of the 30S ribosomal subunit. Associates with free 30S ribosomal subunits (but not with 30S subunits that are part of 70S ribosomes or polysomes). Required for efficient processing of 16S rRNA. May interact with the 5'-terminal helix region of 16S rRNA. In Bifidobacterium adolescentis (strain ATCC 15703 / DSM 20083 / NCTC 11814 / E194a), this protein is Ribosome-binding factor A.